The following is a 381-amino-acid chain: E3 ubiquitin-protein ligase KCMF1 (381 aa).

Residue serine 2 is modified to N-acetylserine. Phosphoserine is present on serine 2. A ZZ-type zinc finger spans residues 4–60; that stretch reads HEGVSCDACLKGNFRGRRYKCLICYDYDLCASCYESGATTTRHTTDHPMQCILTRVD. 8 residues coordinate Zn(2+): cysteine 9, cysteine 12, cysteine 24, cysteine 27, cysteine 33, cysteine 36, histidine 46, and histidine 50. The C2H2-type zinc finger occupies 78–101; that stretch reads FTCPYCGKMGYTETSLQEHVTSEH. Residues 154–194 are disordered; that stretch reads MFHPGRGLGGPRARRSNMHFTSSSTGGLSSSQSSYSPSSRE. Residues serine 169, serine 189, and serine 212 each carry the phosphoserine modification. Residues 175-192 are compositionally biased toward low complexity; that stretch reads SSSTGGLSSSQSSYSPSS. The stretch at 224–259 forms a coiled coil; that stretch reads ASQLQQLQMQLQLERQHAQAARQQLETARNASRRTN. Residues serine 335 and serine 336 each carry the phosphoserine modification.

Belongs to the KCMF1 family. As to quaternary structure, component of the SIFI complex, composed of KCMF1, UBR4 and calmodulin (CALM1, CALM2 or CALM3). Testis, liver, kidney, heart and skeletal muscle.

The protein localises to the cytoplasm. Its subcellular location is the late endosome. It localises to the lysosome. The catalysed reaction is S-ubiquitinyl-[E2 ubiquitin-conjugating enzyme]-L-cysteine + [acceptor protein]-L-lysine = [E2 ubiquitin-conjugating enzyme]-L-cysteine + N(6)-ubiquitinyl-[acceptor protein]-L-lysine.. It functions in the pathway protein modification; protein ubiquitination. E3 ubiquitin-protein ligase which accepts ubiquitin from an E2 ubiquitin-conjugating enzyme and then transfers it to targeted substrates, promoting their degradation by the proteasome. Together with UBR4, component of the N-end rule pathway: ubiquitinates proteins bearing specific N-terminal residues that are destabilizing according to the N-end rule, leading to their degradation. Does not ubiquitinate proteins that are acetylated at the N-terminus. Together with UBR4, part of a protein quality control pathway that catalyzes ubiquitination and degradation of proteins that have been oxidized in response to reactive oxygen species (ROS): recognizes proteins with an Arg-CysO3(H) degron at the N-terminus, and mediates assembly of heterotypic 'Lys-63'-/'Lys-27'-linked branched ubiquitin chains on oxidized proteins, leading to their degradation by autophagy. Catalytic component of the SIFI complex, a multiprotein complex required to inhibit the mitochondrial stress response after a specific stress event has been resolved: ubiquitinates and degrades (1) components of the HRI-mediated signaling of the integrated stress response, such as DELE1 and EIF2AK1/HRI, as well as (2) unimported mitochondrial precursors. Within the SIFI complex, UBR4 initiates ubiquitin chain that are further elongated or branched by KCMF1. This Mus musculus (Mouse) protein is E3 ubiquitin-protein ligase KCMF1.